A 329-amino-acid chain; its full sequence is IDS-like terpene synthase 1 (329 aa).

Asp-79 and Asp-83 together coordinate Mg(2+).

Belongs to the FPP/GGPP synthase family. The cofactor is Mg(2+).

It carries out the reaction (2E)-geranyl diphosphate + H2O = linalool + diphosphate. It catalyses the reaction (2E,6E)-farnesyl diphosphate + H2O = (6E)-nerolidol + diphosphate. Functionally, terpene synthase that shows monoterpene synthase activity and produces linalool, using geranyl diphosphate (GPP) as substrate. Also shows sesquiterpene synthase activity as it is able to convert farnesyl diphosphate (FPP) into (E)-nerolidol. The sequence is that of IDS-like terpene synthase 1 from Melampsora lini (Rust fungus).